The following is a 230-amino-acid chain: Heptaprenylglyceryl phosphate synthase (230 aa).

Lys12 is a sn-glycerol 1-phosphate binding site. Mg(2+)-binding residues include Asp14 and Thr40. Sn-glycerol 1-phosphate contacts are provided by residues 159 to 164 (YIEYSG), Gly189, and 209 to 210 (GD).

The protein belongs to the GGGP/HepGP synthase family. Group I subfamily. Homodimer. Mg(2+) is required as a cofactor.

The catalysed reaction is sn-glycerol 1-phosphate + all-trans-heptaprenyl diphosphate = 3-heptaprenyl-sn-glycero-1-phosphate + diphosphate. Its pathway is membrane lipid metabolism; glycerophospholipid metabolism. Prenyltransferase that catalyzes in vivo the transfer of the heptaprenyl moiety of heptaprenyl pyrophosphate (HepPP; 35 carbon atoms) to the C3 hydroxyl of sn-glycerol-1-phosphate (G1P), producing heptaprenylglyceryl phosphate (HepGP). This reaction is an ether-bond-formation step in the biosynthesis of archaea-type G1P-based membrane lipids found in Bacillales. This is Heptaprenylglyceryl phosphate synthase from Staphylococcus aureus (strain Mu3 / ATCC 700698).